A 1107-amino-acid chain; its full sequence is uncharacterized protein (1107 aa).

The span at 180–204 (SGNGSSGGNNNNNNNSLNNSNNSIG) shows a compositional bias: low complexity. 2 disordered regions span residues 180–251 (SGNG…SGNN) and 501–530 (LMNI…DNQM). Gly residues predominate over residues 205–215 (SSGGNGGGGSN). Residues 219–237 (PSMSPQFTSISKTNSPQII) are compositionally biased toward polar residues. 2 stretches are compositionally biased toward low complexity: residues 238 to 251 (NTSS…SGNN) and 501 to 521 (LMNI…NNND). Coiled coils occupy residues 789–816 (KKDI…IYRE) and 940–1012 (NIDH…NMLK).

This is an uncharacterized protein from Dictyostelium discoideum (Social amoeba).